The following is a 364-amino-acid chain: 3-methyl-2-oxobutanoate hydroxymethyltransferase 1, mitochondrial (364 aa).

The transit peptide at 1–59 (MMMMMRRAFRHLARQQRRPLSHVPESAVYGGPRPQDVGAAAGAGAGAGATRRVTVTTLR) directs the protein to the mitochondrion. 2 residues coordinate Mg(2+): D94 and D133. Residues 94-95 (DS), D133, and K163 each bind 3-methyl-2-oxobutanoate. E165 contributes to the Mg(2+) binding site. E233 acts as the Proton acceptor in catalysis.

It belongs to the PanB family. Mg(2+) serves as cofactor.

The protein resides in the mitochondrion. It carries out the reaction 3-methyl-2-oxobutanoate + (6R)-5,10-methylene-5,6,7,8-tetrahydrofolate + H2O = 2-dehydropantoate + (6S)-5,6,7,8-tetrahydrofolate. It functions in the pathway cofactor biosynthesis; (R)-pantothenate biosynthesis; (R)-pantoate from 3-methyl-2-oxobutanoate: step 1/2. Functionally, catalyzes the reversible reaction in which hydroxymethyl group from 5,10-methylenetetrahydrofolate is transferred onto alpha-ketoisovalerate to form ketopantoate. The chain is 3-methyl-2-oxobutanoate hydroxymethyltransferase 1, mitochondrial (KPHMT1) from Oryza sativa subsp. japonica (Rice).